Reading from the N-terminus, the 344-residue chain is Lipase chaperone (344 aa).

A helical transmembrane segment spans residues 14–34; it reads AVVYGAVGLAAIAGVAMWSGA. Residues 37-78 are disordered; sequence HGGTGASGEPPDASAARGPAAAPPQAAVPASTSLPPSLAGSS. A compositionally biased stretch (low complexity) spans 43 to 78; that stretch reads SGEPPDASAARGPAAAPPQAAVPASTSLPPSLAGSS.

This sequence belongs to the lipase chaperone family.

The protein resides in the cell inner membrane. In terms of biological role, may be involved in the folding of the extracellular lipase during its passage through the periplasm. The protein is Lipase chaperone (lifO) of Burkholderia cepacia (Pseudomonas cepacia).